A 545-amino-acid polypeptide reads, in one-letter code: Carboxypeptidase Y homolog A (545 aa).

The N-terminal stretch at Met1–Gly17 is a signal peptide. A propeptide spanning residues Pro18–Lys123 is cleaved from the precursor. Cystine bridges form between Cys177-Cys416, Cys311-Cys325, Cys335-Cys358, Cys342-Cys351, and Cys380-Cys386. A glycan (N-linked (GlcNAc...) asparagine) is linked at Asn208. Ser264 is a catalytic residue. The active site involves Asp455. 3 N-linked (GlcNAc...) asparagine glycosylation sites follow: Asn485, Asn491, and Asn506. His517 is a catalytic residue.

Belongs to the peptidase S10 family.

The protein resides in the vacuole. The enzyme catalyses Release of a C-terminal amino acid with broad specificity.. Vacuolar carboxypeptidase involved in degradation of small peptides. Digests preferentially peptides containing an aliphatic or hydrophobic residue in P1' position, as well as methionine, leucine or phenylalanine in P1 position of ester substrate. This Ajellomyces dermatitidis (strain ER-3 / ATCC MYA-2586) (Blastomyces dermatitidis) protein is Carboxypeptidase Y homolog A (CPYA).